The sequence spans 543 residues: Protein MGF 505-10R (543 aa).

It belongs to the asfivirus MGF 505 family.

Its function is as follows. Plays a role in virus cell tropism, and may be required for efficient virus replication in macrophages. The polypeptide is Protein MGF 505-10R (African swine fever virus (isolate Tick/South Africa/Pretoriuskop Pr4/1996) (ASFV)).